The sequence spans 249 residues: tRNA (guanine-N(1)-)-methyltransferase (249 aa).

S-adenosyl-L-methionine contacts are provided by residues G113 and 133–138; that span reads IGDFVL.

Belongs to the RNA methyltransferase TrmD family. As to quaternary structure, homodimer.

It localises to the cytoplasm. The catalysed reaction is guanosine(37) in tRNA + S-adenosyl-L-methionine = N(1)-methylguanosine(37) in tRNA + S-adenosyl-L-homocysteine + H(+). Specifically methylates guanosine-37 in various tRNAs. This Aliivibrio salmonicida (strain LFI1238) (Vibrio salmonicida (strain LFI1238)) protein is tRNA (guanine-N(1)-)-methyltransferase.